Reading from the N-terminus, the 176-residue chain is Woronin body major protein (176 aa).

A propeptide spanning residues 1–16 is cleaved from the precursor; sequence MGYYDDDAHGHVEADA. Residues 1–16 show a composition bias toward basic and acidic residues; that stretch reads MGYYDDDAHGHVEADA. The segment at 1–31 is disordered; the sequence is MGYYDDDAHGHVEADAAPRATTGTGTGSASQ. A Microbody targeting signal motif is present at residues 174–176; that stretch reads SRL.

The protein belongs to the eIF-5A family. Hex1 subfamily. In terms of assembly, forms oligomers. Self-assembles into hexagonal rods.

The protein localises to the cell septum. Major component of Woronin bodies, fungal-specific organelles that occlude septal pores in order to separate intact from damaged compartments. Hex-1 binds directly or indirectly to the Woronin body tether that in turn is anchored at the rim of the septal pore. The chain is Woronin body major protein from Neurospora crassa (strain ATCC 24698 / 74-OR23-1A / CBS 708.71 / DSM 1257 / FGSC 987).